A 315-amino-acid polypeptide reads, in one-letter code: MKWTEVKVETASEAVEAISNIMMEAGASGVAIEDALDIENFESDLYGEILDKEQFTHIKEGAIVMAYFPETTFLTEILPFMKENILRLPEYGLSIGKNEMTISEVAESDWATAWKKYYHPVRVTRFLTIVPSWEAYHAQDEAEKIITLDPGMAFGTGTHPTTRLTLQALETVLRGGETVLDVGTGSGVLSIASRYLGAKDVYAYDLDEVAVAAAKENMDLNPIAADVHVSANDLLKGIDHSADVIVANILADIIVLMIEDAWRLLKQDGTFIISGIIEDKKAMVLEALTKVGFVVDQLFNQGDWYAIILKKPEEE.

S-adenosyl-L-methionine is bound by residues Thr162, Gly183, Asp205, and Asn248.

This sequence belongs to the methyltransferase superfamily. PrmA family.

It is found in the cytoplasm. It carries out the reaction L-lysyl-[protein] + 3 S-adenosyl-L-methionine = N(6),N(6),N(6)-trimethyl-L-lysyl-[protein] + 3 S-adenosyl-L-homocysteine + 3 H(+). In terms of biological role, methylates ribosomal protein L11. The polypeptide is Ribosomal protein L11 methyltransferase (Enterococcus faecalis (strain ATCC 700802 / V583)).